A 314-amino-acid polypeptide reads, in one-letter code: 4-hydroxy-3-methylbut-2-enyl diphosphate reductase (314 aa).

Cys-12 is a [4Fe-4S] cluster binding site. 2 residues coordinate (2E)-4-hydroxy-3-methylbut-2-enyl diphosphate: His-41 and His-74. Dimethylallyl diphosphate is bound by residues His-41 and His-74. Residues His-41 and His-74 each coordinate isopentenyl diphosphate. [4Fe-4S] cluster is bound at residue Cys-96. His-124 contacts (2E)-4-hydroxy-3-methylbut-2-enyl diphosphate. His-124 is a dimethylallyl diphosphate binding site. His-124 serves as a coordination point for isopentenyl diphosphate. Glu-126 serves as the catalytic Proton donor. (2E)-4-hydroxy-3-methylbut-2-enyl diphosphate is bound at residue Thr-167. Cys-197 lines the [4Fe-4S] cluster pocket. Positions 225, 226, 227, and 269 each coordinate (2E)-4-hydroxy-3-methylbut-2-enyl diphosphate. Residues Ser-225, Ser-226, Asn-227, and Ser-269 each contribute to the dimethylallyl diphosphate site. The isopentenyl diphosphate site is built by Ser-225, Ser-226, Asn-227, and Ser-269.

The protein belongs to the IspH family. The cofactor is [4Fe-4S] cluster.

It carries out the reaction isopentenyl diphosphate + 2 oxidized [2Fe-2S]-[ferredoxin] + H2O = (2E)-4-hydroxy-3-methylbut-2-enyl diphosphate + 2 reduced [2Fe-2S]-[ferredoxin] + 2 H(+). The enzyme catalyses dimethylallyl diphosphate + 2 oxidized [2Fe-2S]-[ferredoxin] + H2O = (2E)-4-hydroxy-3-methylbut-2-enyl diphosphate + 2 reduced [2Fe-2S]-[ferredoxin] + 2 H(+). It participates in isoprenoid biosynthesis; dimethylallyl diphosphate biosynthesis; dimethylallyl diphosphate from (2E)-4-hydroxy-3-methylbutenyl diphosphate: step 1/1. The protein operates within isoprenoid biosynthesis; isopentenyl diphosphate biosynthesis via DXP pathway; isopentenyl diphosphate from 1-deoxy-D-xylulose 5-phosphate: step 6/6. Catalyzes the conversion of 1-hydroxy-2-methyl-2-(E)-butenyl 4-diphosphate (HMBPP) into a mixture of isopentenyl diphosphate (IPP) and dimethylallyl diphosphate (DMAPP). Acts in the terminal step of the DOXP/MEP pathway for isoprenoid precursor biosynthesis. This is 4-hydroxy-3-methylbut-2-enyl diphosphate reductase from Haemophilus influenzae (strain PittGG).